The sequence spans 88 residues: Large ribosomal subunit protein bL27 (88 aa).

Polar residues predominate over residues 1–13 (MATKKGASSSSNG). The disordered stretch occupies residues 1-23 (MATKKGASSSSNGRDSEAKRLGV).

Belongs to the bacterial ribosomal protein bL27 family.

This Corynebacterium urealyticum (strain ATCC 43042 / DSM 7109) protein is Large ribosomal subunit protein bL27.